The primary structure comprises 810 residues: DNA ligase (810 aa).

Residues 46 to 50 (DAEYD), 95 to 96 (SL), and Glu-129 each bind NAD(+). Lys-131 serves as the catalytic N6-AMP-lysine intermediate. The NAD(+) site is built by Arg-152, Glu-189, Lys-305, and Lys-329. The Zn(2+) site is built by Cys-434, Cys-437, Cys-458, and Cys-464. The disordered stretch occupies residues 528–548 (ERRAESGTAEPPKKAAKKKGD). The 80-residue stretch at 731–810 (AAASTFAGKT…DDWLAMVAQG (80 aa)) folds into the BRCT domain.

The protein belongs to the NAD-dependent DNA ligase family. LigA subfamily. Mg(2+) is required as a cofactor. The cofactor is Mn(2+).

It carries out the reaction NAD(+) + (deoxyribonucleotide)n-3'-hydroxyl + 5'-phospho-(deoxyribonucleotide)m = (deoxyribonucleotide)n+m + AMP + beta-nicotinamide D-nucleotide.. DNA ligase that catalyzes the formation of phosphodiester linkages between 5'-phosphoryl and 3'-hydroxyl groups in double-stranded DNA using NAD as a coenzyme and as the energy source for the reaction. It is essential for DNA replication and repair of damaged DNA. This Methylobacterium radiotolerans (strain ATCC 27329 / DSM 1819 / JCM 2831 / NBRC 15690 / NCIMB 10815 / 0-1) protein is DNA ligase.